Reading from the N-terminus, the 325-residue chain is Glycerol-3-phosphate dehydrogenase [NAD(P)+] (325 aa).

NADPH is bound by residues Trp-11, Arg-30, and Lys-103. Sn-glycerol 3-phosphate contacts are provided by Lys-103, Gly-131, and Ser-133. Residue Ala-135 coordinates NADPH. Residues Lys-186, Asp-242, Ser-252, Arg-253, and Asn-254 each contribute to the sn-glycerol 3-phosphate site. Residue Lys-186 is the Proton acceptor of the active site. An NADPH-binding site is contributed by Arg-253. The NADPH site is built by Val-279 and Glu-281.

The protein belongs to the NAD-dependent glycerol-3-phosphate dehydrogenase family.

It is found in the cytoplasm. It carries out the reaction sn-glycerol 3-phosphate + NAD(+) = dihydroxyacetone phosphate + NADH + H(+). The catalysed reaction is sn-glycerol 3-phosphate + NADP(+) = dihydroxyacetone phosphate + NADPH + H(+). It participates in membrane lipid metabolism; glycerophospholipid metabolism. Catalyzes the reduction of the glycolytic intermediate dihydroxyacetone phosphate (DHAP) to sn-glycerol 3-phosphate (G3P), the key precursor for phospholipid synthesis. This is Glycerol-3-phosphate dehydrogenase [NAD(P)+] from Wolbachia pipientis subsp. Culex pipiens (strain wPip).